The primary structure comprises 788 residues: Spastin (788 aa).

The disordered stretch occupies residues 1-105 (MVRTKNQSSS…PRSAGGPSSV (105 aa)). Over 1–116 (MVRTKNQSSS…KQNLYVVSFP (116 aa)) the chain is Cytoplasmic. The interval 1 to 227 (MVRTKNQSSS…NRSGSGYSPG (227 aa)) is required for localization to punctate cytoplasmic foci. Low complexity-rich tracts occupy residues 8 to 48 (SSSS…SSHR) and 57 to 75 (ATNV…SSPD). An intramembrane region (helical) is located at residues 117 to 137 (IIFLFNVLRSLIYQLFCIFRY). The Cytoplasmic portion of the chain corresponds to 138–788 (LYGASTKVIY…WSSDYGDITI (651 aa)). A sufficient for interaction with microtubules and microtubule severing region spans residues 227–788 (GPGDPLLAKQ…WSSDYGDITI (562 aa)). Positions 240–315 (HRRAFEYISK…SMARDRLHFL (76 aa)) constitute an MIT domain. Over residues 331–353 (EKQKANESREQQQKPQKAREAAD) the composition is skewed to basic and acidic residues. The segment at 331–484 (EKQKANESRE…SGSGSGASTP (154 aa)) is disordered. The segment covering 387 to 400 (ATATTPTSSSSLAS) has biased composition (low complexity). 2 stretches are compositionally biased toward polar residues: residues 419 to 433 (NKSQ…SKTS) and 453 to 469 (QFSS…RTPI). Residues 471–485 (NNGASGSGSGASTPV) form a required for interaction with microtubules region. Residue 553–560 (GPPGNGKT) coordinates ATP.

It belongs to the AAA ATPase family. Spastin subfamily. As to quaternary structure, homohexamer. The homohexamer is stabilized by ATP-binding. The homohexamer may adopt a ring conformation through which microtubules pass prior to being severed. Interacts with microtubules. Interacts with atl; may be involved in microtubule dynamics.

It localises to the membrane. Its subcellular location is the cytoplasm. The protein resides in the cytoskeleton. It is found in the microtubule organizing center. The protein localises to the centrosome. It localises to the chromosome. Its subcellular location is the lipid droplet. The catalysed reaction is n ATP + n H2O + a microtubule = n ADP + n phosphate + (n+1) alpha/beta tubulin heterodimers.. Its function is as follows. ATP-dependent microtubule severing protein. Stimulates microtubule minus-end depolymerization and poleward microtubule flux in the mitotic spindle. Regulates microtubule stability in the neuromuscular junction synapse. Involved in lipid metabolism by regulating the size and distribution of lipid droplets. Involved in axon regeneration by regulating microtubule severing. The chain is Spastin from Drosophila persimilis (Fruit fly).